We begin with the raw amino-acid sequence, 372 residues long: Embryonic growth/differentiation factor 1 (372 aa).

The N-terminal stretch at 1–29 (MPPPQQGPCGHHLLLLLALLLPSLPLTRA) is a signal peptide. Positions 30 to 253 (PVPPGPAAAL…LCHPLARPRR (224 aa)) are excised as a propeptide. The segment at 67–86 (RRRDPQETRSGSRRTSPGVT) is disordered. A glycan (N-linked (GlcNAc...) asparagine) is linked at Asn-206. 3 cysteine pairs are disulfide-bonded: Cys-267–Cys-337, Cys-296–Cys-369, and Cys-300–Cys-371.

This sequence belongs to the TGF-beta family. Homodimer; disulfide-linked. In terms of tissue distribution, expressed in the brain.

It localises to the secreted. May mediate cell differentiation events during embryonic development. The sequence is that of Embryonic growth/differentiation factor 1 (GDF1) from Homo sapiens (Human).